Reading from the N-terminus, the 261-residue chain is MSRRYDSRTTIFSPEGRLYQVEYAMEAIGHAGTCLGILANDGVLLAAERRNIHKLLDEVFFSEKIYKLNEDMACSVAGITSDANVLTNELRLIAQRYLLQYQEPIPCEQLVTALCDIKQAYTQFGGKRPFGVSLLYIGWDKHYGFQLYQSDPNGNYGGWKATCIGNNSAAAVSMLKQDYKEGEMTLKSALALAIKVLNKTMDVSKLSAEKVEIATLTRENGKTVIRVLKQKEVEQLIKKHEEEEAKAEREKKEKEQKEKDK.

Phosphoserine occurs at positions 13 and 75. At Lys-127 the chain carries N6-acetyllysine. Ser-173 is modified (phosphoserine). Lys-176 carries the N6-acetyllysine modification. Positions 240-261 (HEEEEAKAEREKKEKEQKEKDK) are disordered.

The protein belongs to the peptidase T1A family. As to quaternary structure, the 26S proteasome consists of a 20S proteasome core and two 19S regulatory subunits. The 20S proteasome core is a barrel-shaped complex made of 28 subunits that are arranged in four stacked rings. The two outer rings are each formed by seven alpha subunits, and the two inner rings are formed by seven beta subunits. The proteolytic activity is exerted by three beta-subunits PSMB5, PSMB6 and PSMB7.

It localises to the cytoplasm. It is found in the nucleus. Component of the 20S core proteasome complex involved in the proteolytic degradation of most intracellular proteins. This complex plays numerous essential roles within the cell by associating with different regulatory particles. Associated with two 19S regulatory particles, forms the 26S proteasome and thus participates in the ATP-dependent degradation of ubiquitinated proteins. The 26S proteasome plays a key role in the maintenance of protein homeostasis by removing misfolded or damaged proteins that could impair cellular functions, and by removing proteins whose functions are no longer required. Associated with the PA200 or PA28, the 20S proteasome mediates ubiquitin-independent protein degradation. This type of proteolysis is required in several pathways including spermatogenesis (20S-PA200 complex) or generation of a subset of MHC class I-presented antigenic peptides (20S-PA28 complex). This chain is Proteasome subunit alpha type-4 (PSMA4), found in Macaca fascicularis (Crab-eating macaque).